The sequence spans 215 residues: MESNPPDSTGPMHVPFGHIVANEKWRGSQLAQGMQGKIKLVFEDGLTPVDFYLSSKSCILYITEAELVAGNGYRKRLVRVRNSNKLQGIVVVEKTQMSEQYFPAVQKFTVLDLGMVLLPVASQMEASCLIIQLVQEQTREPSKNPFLRKKRALVSEPALLRSVQQIPGVGKVKAPLLLQRFPSIQQLSNASLRELEAVVGPAAAQRIHAFFSQPR.

In terms of assembly, belongs to the multisubunit FA complex composed of FANCA, FANCB, FANCC, FANCE, FANCF, FANCG, FANCL/PHF9, FANCM and FAAP24. Interacts with FANCM.

The protein localises to the nucleus. Plays a role in DNA repair through recruitment of the FA core complex to damaged DNA. Regulates FANCD2 monoubiquitination upon DNA damage. Induces chromosomal instability as well as hypersensitivity to DNA cross-linking agents, when repressed. Targets FANCM/FAAP24 complex to the DNA, preferentially to single strand DNA. In Bos taurus (Bovine), this protein is Fanconi anemia core complex-associated protein 24.